The following is a 403-amino-acid chain: S-adenosylmethionine:tRNA ribosyltransferase-isomerase (403 aa).

The protein belongs to the QueA family. Monomer.

It is found in the cytoplasm. It carries out the reaction 7-aminomethyl-7-carbaguanosine(34) in tRNA + S-adenosyl-L-methionine = epoxyqueuosine(34) in tRNA + adenine + L-methionine + 2 H(+). The protein operates within tRNA modification; tRNA-queuosine biosynthesis. In terms of biological role, transfers and isomerizes the ribose moiety from AdoMet to the 7-aminomethyl group of 7-deazaguanine (preQ1-tRNA) to give epoxyqueuosine (oQ-tRNA). The polypeptide is S-adenosylmethionine:tRNA ribosyltransferase-isomerase (Psychrobacter arcticus (strain DSM 17307 / VKM B-2377 / 273-4)).